We begin with the raw amino-acid sequence, 289 residues long: ATP synthase gamma chain (289 aa).

Belongs to the ATPase gamma chain family. F-type ATPases have 2 components, CF(1) - the catalytic core - and CF(0) - the membrane proton channel. CF(1) has five subunits: alpha(3), beta(3), gamma(1), delta(1), epsilon(1). CF(0) has three main subunits: a, b and c.

The protein localises to the cell inner membrane. In terms of biological role, produces ATP from ADP in the presence of a proton gradient across the membrane. The gamma chain is believed to be important in regulating ATPase activity and the flow of protons through the CF(0) complex. The chain is ATP synthase gamma chain from Halorhodospira halophila (strain DSM 244 / SL1) (Ectothiorhodospira halophila (strain DSM 244 / SL1)).